The chain runs to 78 residues: ATP synthase subunit a (78 aa).

A helical membrane pass occupies residues 34–54 (LTNIGLYLTIGIFLILTYSLL).

This sequence belongs to the ATPase A chain family. As to quaternary structure, F-type ATPases have 2 components, CF(1) - the catalytic core - and CF(0) - the membrane proton channel. CF(1) has five subunits: alpha(3), beta(3), gamma(1), delta(1), epsilon(1). CF(0) has three main subunits: a, b and c.

Its subcellular location is the mitochondrion inner membrane. Mitochondrial membrane ATP synthase (F(1)F(0) ATP synthase or Complex V) produces ATP from ADP in the presence of a proton gradient across the membrane which is generated by electron transport complexes of the respiratory chain. F-type ATPases consist of two structural domains, F(1) - containing the extramembraneous catalytic core and F(0) - containing the membrane proton channel, linked together by a central stalk and a peripheral stalk. During catalysis, ATP synthesis in the catalytic domain of F(1) is coupled via a rotary mechanism of the central stalk subunits to proton translocation. Key component of the proton channel; it may play a direct role in the translocation of protons across the membrane. The sequence is that of ATP synthase subunit a (atp6) from Aspergillus amstelodami.